The sequence spans 167 residues: Telethonin (167 aa).

S39 is subject to Phosphoserine. The tract at residues 142-167 is disordered; that stretch reads PVVPVSKPGPLRRTLSRSMSQEAQRG. A compositionally biased stretch (polar residues) spans 157 to 167; sequence SRSMSQEAQRG.

As to quaternary structure, interacts with MYOZ1, MYOZ2 and MYOZ3. Interacts with CSRP3. Interacts directly with the N-terminal Ig-like domains of 2 titin (TTN) molecules. Interacts with ANKRD2; the interaction is direct.

It localises to the cytoplasm. The protein resides in the myofibril. Its subcellular location is the sarcomere. Its function is as follows. Muscle assembly regulating factor. Mediates the antiparallel assembly of titin (TTN) molecules at the sarcomeric Z-disk. This Mus musculus (Mouse) protein is Telethonin (Tcap).